The following is a 1017-amino-acid chain: Pikachurin (1017 aa).

Positions methionine 1 to serine 24 are cleaved as a signal peptide. 2 Fibronectin type-III domains span residues proline 37 to glutamine 136 and alanine 144 to proline 239. N-linked (GlcNAc...) asparagine glycosylation is present at asparagine 47. In terms of domain architecture, EGF-like 1 spans phenylalanine 343–serine 381. 11 disulfide bridges follow: cysteine 347-cysteine 358, cysteine 352-cysteine 369, cysteine 371-cysteine 380, cysteine 534-cysteine 564, cysteine 569-cysteine 580, cysteine 574-cysteine 590, cysteine 592-cysteine 601, cysteine 788-cysteine 799, cysteine 793-cysteine 808, cysteine 810-cysteine 819, and cysteine 987-cysteine 1014. The Laminin G-like 1 domain occupies isoleucine 386 to cysteine 564. EGF-like domains lie at serine 565–glutamate 602 and alanine 784–glutamine 820. The Laminin G-like 2 domain occupies isoleucine 609–cysteine 788. In terms of domain architecture, Laminin G-like 3 spans isoleucine 835–cysteine 1014.

As to quaternary structure, interacts with DAG1 alpha-dystroglycan. Interacts with GPR158 and GPR179; transsynaptic interaction is required for synaptic organization of photoreceptor cells. O-glycosylated; contains chondroitin sulfate and heparan sulfate.

The protein resides in the secreted. The protein localises to the extracellular space. Its subcellular location is the extracellular matrix. It is found in the synaptic cleft. It localises to the presynaptic active zone. Involved in both the retinal photoreceptor ribbon synapse formation and physiological functions of visual perception. Plays a key role in the synaptic organization of photoreceptors by mediating transsynaptic interaction between alpha-dystroglycan and GPR179 on the postsynaptic membrane. Necessary for proper bipolar dendritic tip apposition to the photoreceptor ribbon synapse. Promotes matrix assembly and cell adhesiveness. This chain is Pikachurin (EGFLAM), found in Homo sapiens (Human).